The sequence spans 167 residues: Large ribosomal subunit protein uL10 (167 aa).

It belongs to the universal ribosomal protein uL10 family. Part of the ribosomal stalk of the 50S ribosomal subunit. The N-terminus interacts with L11 and the large rRNA to form the base of the stalk. The C-terminus forms an elongated spine to which L12 dimers bind in a sequential fashion forming a multimeric L10(L12)X complex.

Its function is as follows. Forms part of the ribosomal stalk, playing a central role in the interaction of the ribosome with GTP-bound translation factors. In Ligilactobacillus salivarius (strain UCC118) (Lactobacillus salivarius), this protein is Large ribosomal subunit protein uL10.